A 322-amino-acid polypeptide reads, in one-letter code: MPTVGLTGPLCSGKDAVVEYLETKHGFNAIFRLPQLNEDGEYIYRTGDLVLGSVDDLISYLTPRWRERFVINGIHSPRLLSALLKRPFFLLVYIDAPIMLRFNRYKTYSSLANTTLEEFCSIQDAAAFQSDNAGTRHRALANLLINNDSNIKLHLWEKLQKADLLNPNRFRPSWDSYFMEMASLAAKRSNCMKRRVGCVLVRGNRVIATGYNGTPRGATNCNEGGCPRCNSASSCGKELDTCLCLHAEENALLEAGRERVGNNAILYCDTCPCLTCSVKITQLGIKEVVYHTSYNMDSHTASLLQAAGVQLRQYIPPENSIF.

A CMP/dCMP-type deaminase domain is found at 173–311 (SWDSYFMEMA…SLLQAAGVQL (139 aa)). His246 contributes to the Zn(2+) binding site. Catalysis depends on Glu248, which acts as the Proton donor. Residues Cys273 and Cys276 each contribute to the Zn(2+) site.

It belongs to the cytidine and deoxycytidylate deaminase family. Zn(2+) is required as a cofactor.

It is found in the cytoplasm. The protein resides in the nucleus. It catalyses the reaction dCMP + H2O + H(+) = dUMP + NH4(+). In terms of biological role, supplies the nucleotide substrate for thymidylate synthetase. The sequence is that of Deoxycytidylate deaminase from Schizosaccharomyces pombe (strain 972 / ATCC 24843) (Fission yeast).